The chain runs to 197 residues: MRIYSCHFCSSPVYPGHGIMFVRNDAKEFRFCRSKCHKAFKQRRNPRKLKWTKAFRKAAGKELAVDSTLTFAQRRNVPVRYNRELVETTLKAMTRIEEIRQKRERAFYKNRMKGNTEKDFLRDKKLVESNPELLKMREVELQRQAERAAAGVDEDAEMGDSDEEMEDASEEESEEEEQQQQKIVLKNKKRSAKKIAF.

The interval 144–197 (QAERAAAGVDEDAEMGDSDEEMEDASEEESEEEEQQQQKIVLKNKKRSAKKIAF) is disordered. Acidic residues predominate over residues 152-178 (VDEDAEMGDSDEEMEDASEEESEEEEQ). Basic residues predominate over residues 185–197 (LKNKKRSAKKIAF).

Belongs to the eukaryotic ribosomal protein eL24 family. As to quaternary structure, associated with nucleolar and cytoplasmic pre-60S particles. At the end of biogenesis it dissociates from cytoplasmic pre-60S particles and is likely to be exchanged for its ribosomal homolog, RPL24.

Its subcellular location is the cytoplasm. The protein resides in the nucleus. In terms of biological role, involved in the biogenesis of the 60S ribosomal subunit. Ensures the docking of NOG1 to pre-60S particles. Activates and recruits ATPase AFG2 to cytoplasmic pre-60S ribosomal particles. The sequence is that of Ribosome biogenesis protein RLP24 (RLP24) from Eremothecium gossypii (strain ATCC 10895 / CBS 109.51 / FGSC 9923 / NRRL Y-1056) (Yeast).